The following is a 1905-amino-acid chain: MEMEANDHFNFTGLPPAPAASGLKPSPSSGEGLYTNGSPMNFPQQGKSLNGDVNVNGLSTVSHTTTSGILNSAPHSSSTSHLHHPSVAYDCLWNYSQYPSANPGSNLKDPPLLSQFSGGQYPLNGILGGSRQPSSPSHNTNLRAGSQEFWANGTQSPMGLNFDSQELYDSFPDQNFEVMPNGPPSFFTSPQTSPMLGSSIQTFAPSQEVGSGIHPDEAAEKEMTSVVAENGTGLVGSLELEEEQPELKMCGYNGSVPSVESLHQEVSVLVPDPTVSCLDDPSHLPDQLEDTPILSEDSLEPFNSLAPEPVSGGLYGIDDTELMGAEDKLPLEDSPVISALDCPSLNNATAFSLLADDSQTSTSIFASPTSPPVLGESVLQDNSFDLNNGSDAEQEEMETQSSDFPPSLTQPAPDQSSTIQLHPATSPAVSPTTSPAVSLVVSPAASPEISPEVCPAASTVVSPAVFSVVSPASSAVLPAVSLEVPLTASVTSPKASPVTSPAAAFPTASPANKDVSSFLETTADVEEITGEGLTASGSGDVMRRRIATPEEVRLPLQHGWRREVRIKKGSHRWQGETWYYGPCGKRMKQFPEVIKYLSRNVVHSVRREHFSFSPRMPVGDFFEERDTPEGLQWVQLSAEEIPSRIQAITGKRGRPRNTEKAKTKEVPKVKRGRGRPPKVKITELLNKTDNRPLKKLEAQETLNEEDKAKIAKSKKKMRQKVQRGECQTTIQGQARNKRKQETKSLKQKEAKKKSKAEKEKGKTKQEKLKEKVKREKKEKVKMKEKEEVTKAKPACKADKTLATQRRLEERQRQQMILEEMKKPTEDMCLTDHQPLPDFSRVPGLTLPSGAFSDCLTIVEFLHSFGKVLGFDPAKDVPSLGVLQEGLLCQGDSLGEVQDLLVRLLKAALHDPGFPSYCQSLKILGEKVSEIPLTRDNVSEILRCFLMAYGVEPALCDRLRTQPFQAQPPQQKAAVLAFLVHELNGSTLIINEIDKTLESMSSYRKNKWIVEGRLRRLKTVLAKRTGRSEVEMEGPEECLGRRRSSRIMEETSGMEEEEEEESIAAVPGRRGRRDGEVDATASSIPELERQIEKLSKRQLFFRKKLLHSSQMLRAVSLGQDRYRRRYWVLPYLAGIFVEGTEGNLVPEEVIKKETDSLKVAAHASLNPALFSMKMELAGSNTTASSPARARGRPRKTKPGSMQPRHLKSPVRGQDSEQPQAQLQPEAQLHAPAQPQPQLQLQLQSHKGFLEQEGSPLSLGQSQHDLSQSAFLSWLSQTQSHSSLLSSSVLTPDSSPGKLDPAPSQPPEEPEPDEAESSPDPQALWFNISAQMPCNAAPTPPPAVSEDQPTPSPQQLASSKPMNRPSAANPCSPVQFSSTPLAGLAPKRRAGDPGEMPQSPTGLGQPKRRGRPPSKFFKQMEQRYLTQLTAQPVPPEMCSGWWWIRDPEMLDAMLKALHPRGIREKALHKHLNKHRDFLQEVCLRPSADPIFEPRQLPAFQEGIMSWSPKEKTYETDLAVLQWVEELEQRVIMSDLQIRGWTCPSPDSTREDLAYCEHLSDSQEDITWRGRGREGLAPQRKTTNPLDLAVMRLAALEQNVERRYLREPLWPTHEVVLEKALLSTPNGAPEGTTTEISYEITPRIRVWRQTLERCRSAAQVCLCLGQLERSIAWEKSVNKVTCLVCRKGDNDEFLLLCDGCDRGCHIYCHRPKMEAVPEGDWFCTVCLAQQVEGEFTQKPGFPKRGQKRKSGYSLNFSEGDGRRRRVLLRGRESPAAGPRYSEEGLSPSKRRRLSMRNHHSDLTFCEIILMEMESHDAAWPFLEPVNPRLVSGYRRIIKNPMDFSTMRERLLRGGYTSSEEFAADALLVFDNCQTFNEDDSEVGKAGHIMRRFFESRWEEFYQGKQANL.

Disordered stretches follow at residues 1-59 (MEME…NGLS) and 362-434 (TSIF…PTTS). 3 stretches are compositionally biased toward polar residues: residues 35-59 (TNGS…NGLS), 379-391 (LQDN…NGSD), and 399-420 (TQSS…STIQ). T507 carries the phosphothreonine modification. Residue S509 is modified to Phosphoserine. One can recognise an MBD domain in the interval 546-617 (IATPEEVRLP…EHFSFSPRMP (72 aa)). Position 548 is a phosphothreonine (T548). A Phosphoserine modification is found at S613. The tract at residues 648–792 (ITGKRGRPRN…KEKEEVTKAK (145 aa)) is disordered. DNA-binding regions (a.T hook) lie at residues 649 to 661 (TGKR…TEKA) and 670 to 682 (KRGR…VKIT). Positions 656-668 (RNTEKAKTKEVPK) are enriched in basic and acidic residues. The span at 669–678 (VKRGRGRPPK) shows a compositional bias: basic residues. Residue K680 is modified to N6-acetyllysine; by KAT8. Residues 686-709 (NKTDNRPLKKLEAQETLNEEDKAK) are compositionally biased toward basic and acidic residues. The stretch at 693-792 (LKKLEAQETL…KEKEEVTKAK (100 aa)) forms a coiled coil. A compositionally biased stretch (basic residues) spans 710–721 (IAKSKKKMRQKV). Positions 725–734 (ECQTTIQGQA) are enriched in polar residues. Basic and acidic residues-rich tracts occupy residues 739 to 748 (KQETKSLKQK) and 756 to 792 (AEKE…TKAK). K799 carries the N6-acetyllysine modification. In terms of domain architecture, DDT spans 848–913 (SGAFSDCLTI…LKAALHDPGF (66 aa)). K866 is covalently cross-linked (Glycyl lysine isopeptide (Lys-Gly) (interchain with G-Cter in SUMO2)). A Phosphoserine modification is found at S1051. Residues K1150 and K1172 each participate in a glycyl lysine isopeptide (Lys-Gly) (interchain with G-Cter in SUMO2) cross-link. Disordered regions lie at residues 1178-1220 (SNTT…PQAQ), 1283-1318 (LSSS…SSPD), and 1330-1412 (MPCN…RPPS). A Phosphoserine modification is found at S1184. A DNA-binding region (a.T hook 3) is located at residues 1186–1198 (ARARGRPRKTKPG). The span at 1283 to 1293 (LSSSVLTPDSS) shows a compositional bias: low complexity. The span at 1306-1315 (EEPEPDEAES) shows a compositional bias: acidic residues. The span at 1345–1359 (DQPTPSPQQLASSKP) shows a compositional bias: polar residues. At S1397 the chain carries Phosphoserine. Positions 1404 to 1416 (PKRRGRPPSKFFK) form a DNA-binding region, a.T hook 4. Residue S1559 is modified to Phosphoserine. Residues K1676 and K1709 each participate in a glycyl lysine isopeptide (Lys-Gly) (interchain with G-Cter in SUMO2) cross-link. Residues 1676–1726 (KVTCLVCRKGDNDEFLLLCDGCDRGCHIYCHRPKMEAVPEGDWFCTVCLAQ) form a PHD-type zinc finger. Disordered regions lie at residues 1734–1755 (QKPG…NFSE) and 1769–1789 (ESPA…KRRR). 4 positions are modified to phosphoserine: S1747, S1770, S1783, and S1785. The region spanning 1793-1897 (RNHHSDLTFC…RFFESRWEEF (105 aa)) is the Bromo domain.

The protein belongs to the WAL family. Component of the NoRC-1 ISWI chromatin remodeling complex at least composed of SMARCA1 and BAZ2A/TIP5, which regulates the spacing of histone octamers on the DNA template to facilitate access to DNA. Within the NoRC-1 ISWI chromatin remodeling complex interacts with SMARCA1; the interaction is direct. Component of the NoRC-5 ISWI chromatin remodeling complex (also called the NoRC nucleolar-remodeling complex), at least composed of SMARCA5/SNF2H and BAZ2A/TIP5, which regulates the spacing of histone octamers on the DNA template to facilitate access to DNA. Within the NoRC-5 ISWI chromatin remodeling complexes interacts with SMARCA5/SNF2H; the interaction is direct. Interacts with TTF1; the interaction is required for recruitment of the NoRC-5 ISWI chromatin remodeling complex to rDNA. Interacts with HDAC1. Interacts with SIN3A. Interacts with DNMT1 and DNM3B. Interacts with BEND3 and USP21. In terms of processing, acetylation at Lys-680 by KAT8/MOF promotes its dissociation from pRNA, affecting heterochromatin formation, nucleosome positioning and rDNA silencing. Deacetylation by SIRT1 in late S phase enhances pRNA-binding, allowing de novo DNA methylation and heterochromatin formation. Acetylation is high during S phase and declines to background levels in late S phase when the silent copies of rRNA genes are replicated. Post-translationally, ubiquitinated. Deubiquitinated by USP21 leading to its stabilization. As to expression, expressed at moderate levels in most tissues analyzed, including heart, brain, placenta, lung, skeletal muscle, kidney and pancreas.

The protein resides in the nucleus. The protein localises to the nucleolus. Its function is as follows. Regulatory subunit of the ATP-dependent NoRC-1 and NoRC-5 ISWI chromatin remodeling complexes, which form ordered nucleosome arrays on chromatin and facilitate access to DNA during DNA-templated processes such as DNA replication, transcription, and repair. Both complexes regulate the spacing of nucleosomes along the chromatin and have the ability to slide mononucleosomes to the center of a DNA template. Directly stimulates the ATPase activity of SMARCA5 in the NoRC-5 ISWI chromatin remodeling complex. The NoRC-1 ISWI chromatin remodeling complex has a lower ATP hydrolysis rate than the NoRC-5 ISWI chromatin remodeling complex. Within the NoRC-5 ISWI chromatin remodeling complex, mediates silencing of a fraction of rDNA by recruiting histone-modifying enzymes and DNA methyltransferases, leading to heterochromatin formation and transcriptional silencing. In the complex, it plays a central role by being recruited to rDNA and by targeting chromatin modifying enzymes such as HDAC1, leading to repress RNA polymerase I transcription. Recruited to rDNA via its interaction with TTF1 and its ability to recognize and bind histone H4 acetylated on 'Lys-16' (H4K16ac), leading to deacetylation of H4K5ac, H4K8ac, H4K12ac but not H4K16ac. Specifically binds pRNAs, 150-250 nucleotide RNAs that are complementary in sequence to the rDNA promoter; pRNA-binding is required for heterochromatin formation and rDNA silencing. The protein is Bromodomain adjacent to zinc finger domain protein 2A (BAZ2A) of Homo sapiens (Human).